A 948-amino-acid polypeptide reads, in one-letter code: UvrABC system protein A (948 aa).

31-38 serves as a coordination point for ATP; it reads GLSGSGKS. A C4-type zinc finger spans residues 249 to 277; it reads CPNGHDIGFTELSPRMFSFNSPYGACETC. 2 consecutive ABC transporter domains span residues 307–586 and 606–934; these read WAGS…KNSL and GNGS…QYLK. Position 638–645 (638–645) interacts with ATP; it reads GVSGSGKS. The C4-type zinc-finger motif lies at 737–763; sequence CETCEGDGILKIEMHFLPDVYVTCEVC.

It belongs to the ABC transporter superfamily. UvrA family. In terms of assembly, forms a heterotetramer with UvrB during the search for lesions.

It localises to the cytoplasm. Its function is as follows. The UvrABC repair system catalyzes the recognition and processing of DNA lesions. UvrA is an ATPase and a DNA-binding protein. A damage recognition complex composed of 2 UvrA and 2 UvrB subunits scans DNA for abnormalities. When the presence of a lesion has been verified by UvrB, the UvrA molecules dissociate. The polypeptide is UvrABC system protein A (Leptospira interrogans serogroup Icterohaemorrhagiae serovar copenhageni (strain Fiocruz L1-130)).